A 741-amino-acid chain; its full sequence is Catalase-peroxidase 2 (741 aa).

An N-terminal signal peptide occupies residues 1–28 (MQKKRVGKSVVAALAIIAMSAGTVAAWA). A cross-link (tryptophyl-tyrosyl-methioninium (Trp-Tyr) (with M-254)) is located at residues 107-228 (WHGAGTYRTY…LAATQMGLIY (122 aa)). The active-site Proton acceptor is the His108. Positions 228-254 (YVNPEGPNGNPDPVAAAKDIRDAFGRM) form a cross-link, tryptophyl-tyrosyl-methioninium (Tyr-Met) (with W-107). His269 is a binding site for heme b.

It belongs to the peroxidase family. Peroxidase/catalase subfamily. As to quaternary structure, homodimer or homotetramer. Heme b is required as a cofactor. In terms of processing, formation of the three residue Trp-Tyr-Met cross-link is important for the catalase, but not the peroxidase activity of the enzyme.

It carries out the reaction H2O2 + AH2 = A + 2 H2O. It catalyses the reaction 2 H2O2 = O2 + 2 H2O. Bifunctional enzyme with both catalase and broad-spectrum peroxidase activity. The polypeptide is Catalase-peroxidase 2 (Burkholderia ambifaria (strain ATCC BAA-244 / DSM 16087 / CCUG 44356 / LMG 19182 / AMMD) (Burkholderia cepacia (strain AMMD))).